We begin with the raw amino-acid sequence, 100 residues long: Vesicle-associated membrane protein 8 (100 aa).

Topologically, residues M1–K74 are cytoplasmic. A phosphoserine mark is found at S4 and S17. Positions R11–K71 constitute a v-SNARE coiled-coil homology domain. 3 positions are modified to phosphothreonine: T27, T47, and T53. S54 is modified (phosphoserine). A helical; Anchor for type IV membrane protein transmembrane segment spans residues M75–T95. Residues G96 to T100 lie on the Vesicular side of the membrane.

This sequence belongs to the synaptobrevin family. In terms of assembly, forms a SNARE complex composed of VAMP8, SNAP29 and STX17 involved in fusion of autophagosome with lysosome. Found in a number of SNARE complexes with NAPA, SNAP23, SNAP25, STX1A, STX4, STX7, STX8 and VTI1B. Interacts with PICALM. SNARE complex formation and binding by PICALM are mutually exclusive processes for VAMP8. Interacts with SBF2/MTMR13. Interacts with RAB21 (in GTP-bound form) in response to starvation; the interaction probably regulates VAMP8 endolysosomal trafficking. Interacts with STX17; this interaction is increased in the absence of TMEM39A. Interacts with TRIM6. As to expression, expressed (at protein level) at a high level in kidney, lung and spleen; at a lower level in testis, liver, brain and heart. Expressed in kidney and retinal pigment epithelium derived cell line.

The protein localises to the lysosome membrane. It localises to the late endosome membrane. It is found in the early endosome membrane. The protein resides in the midbody. Its subcellular location is the cell membrane. The protein localises to the zymogen granule membrane. Functionally, SNAREs, soluble N-ethylmaleimide-sensitive factor-attachment protein receptors, are essential proteins for fusion of cellular membranes. SNAREs localized on opposing membranes assemble to form a trans-SNARE complex, an extended, parallel four alpha-helical bundle that drives membrane fusion. VAMP8 is a SNARE involved in autophagy through the direct control of autophagosome membrane fusion with the lysososome membrane via its interaction with the STX17-SNAP29 binary t-SNARE complex. Also required for dense-granule secretion in platelets. Also plays a role in regulated enzyme secretion in pancreatic acinar cells. Involved in the abscission of the midbody during cell division, which leads to completely separate daughter cells. Involved in the homotypic fusion of early and late endosomes. Also participates in the activation of type I interferon antiviral response through a TRIM6-dependent mechanism. This Rattus norvegicus (Rat) protein is Vesicle-associated membrane protein 8.